The following is a 165-amino-acid chain: Large ribosomal subunit protein uL10 (165 aa).

N6-acetyllysine occurs at positions 37 and 105.

This sequence belongs to the universal ribosomal protein uL10 family. Part of the ribosomal stalk of the 50S ribosomal subunit. The N-terminus interacts with L11 and the large rRNA to form the base of the stalk. The C-terminus forms an elongated spine to which L12 dimers bind in a sequential fashion forming a multimeric L10(L12)X complex.

In terms of biological role, protein L10 is also a translational repressor protein. It controls the translation of the rplJL-rpoBC operon by binding to its mRNA. Functionally, forms part of the ribosomal stalk, playing a central role in the interaction of the ribosome with GTP-bound translation factors. The protein is Large ribosomal subunit protein uL10 (rplJ) of Escherichia coli O6:H1 (strain CFT073 / ATCC 700928 / UPEC).